The sequence spans 617 residues: E3 ubiquitin-protein ligase synoviolin (617 aa).

The Cytoplasmic segment spans residues 1-4 (MFRT). Positions 1-84 (MFRTAVMMAA…EHLLERSWYA (84 aa)) are necessary and sufficient for SEL1L interaction. Residues 1–251 (MFRTAVMMAA…LFAIRPMYLA (251 aa)) are involved in FAM8A1 interaction. A helical transmembrane segment spans residues 5 to 25 (AVMMAASLALTGAVVAHAYYL). The Lumenal segment spans residues 26–41 (KHQFYPTVVYLTKSSP). The helical transmembrane segment at 42–62 (SMAVLYIQAFVLVFLLGKVMG) threads the bilayer. Topologically, residues 63–98 (KVFFGQLRAAEMEHLLERSWYAVTETCLAFTVFRDD) are cytoplasmic. The helical transmembrane segment at 99-119 (FSPRFVALFTLLLFLKCFHWL) threads the bilayer. Residues 120 to 140 (AEDRVDFMERSPNISWLFHCR) are Lumenal-facing. The helical transmembrane segment at 141–161 (IVSLMFLLGILDFLFVSHAYH) threads the bilayer. Residues 162-169 (SILTRGAS) are Cytoplasmic-facing. Residues 170-190 (VQLVFGFEYAILMTMVLTIFI) form a helical membrane-spanning segment. Topologically, residues 191 to 224 (KYVLHSVDLQSENPWDNKAVYMLYTELFTGFIKV) are lumenal. Residues 225-245 (LLYMAFMTIMIKVHTFPLFAI) form a helical membrane-spanning segment. The segment at 236 to 270 (KVHTFPLFAIRPMYLAMRQFKKAVTDAIMSRRAIR) is interaction with p53/TP53. At 246–617 (RPMYLAMRQF…LQKLESPVAH (372 aa)) the chain is on the cytoplasmic side. Positions 291, 294, 307, 309, 312, 315, 326, and 329 each coordinate Zn(2+). The segment at 291–330 (CIICREEMVTGAKRLPCNHIFHTSCLRSWFQRQQTCPTCR) adopts an RING-type; atypical zinc-finger fold. Disordered stretches follow at residues 337 to 375 (SLPA…GLLP), 393 to 453 (PVPP…PAPG), and 535 to 617 (RPAT…PVAH). The segment covering 341–375 (QSPPPPEPADQGPPPAPHPPPLLPQPPNFPQGLLP) has biased composition (pro residues). Positions 417–451 (PSGAATTTAAGTSATAASATASGPGSGSAPEAGPA) are enriched in low complexity. Residues 480-535 (GFAGLTPEELRALEGHERQHLEARLQSLRNIHTLLDAAMLQINQYLTVLASLGPPR) are HAF-H domain; necessary to form higher-order Hrd1 complexes. The span at 537–569 (ATSVNSTEETATTVVAAASSTSIPSSEATTPTP) shows a compositional bias: low complexity. The span at 591–600 (EMPEDGEPDA) shows a compositional bias: acidic residues. S613 carries the post-translational modification Phosphoserine.

Belongs to the HRD1 family. As to quaternary structure, homodimer. Interacts with p53/TP53. Interacts with HTT. Component of the HRD1 complex, which comprises at least SYNV1/HRD1, DERL1/2, FAM8A1, HERPUD1/HERP, OS9, SEL1L and UBE2J1. FAM8A1 is stabilized by interaction with SYNV1, which prevents its proteasomal degradation. OS9 and UBE2J1 recruitment to the complex may be mediated by SEL1L. SYNV1 assembles with SEL1L and FAM8A1 through its transmembrane domains, but interaction with its cytoplasmic domain is required to confer stability to FAM8A1 and enhance recruitment of HERPUD1. The HRD1 complex also associates with VIMP and may transfer misfolded proteins from the endoplasmic reticulum to VCP. May form a complex with ERLEC1, HSPA5, OS9 and SEL1L. Interacts with VCP. Interacts with UBXN6. Interacts with BAG6. Interacts with NFE2L1. Interacts (via N-terminus) with components of the pre-B cell receptor, including IGLL1 and VPREB1. Interacts with CREB3L3; this interaction leads to CREB3L3 ubiquitination and proteasomal degradation. Not N-glycosylated. In terms of processing, auto-ubiquitinated. Deubiquitinated by USP19. Ubiquitously expressed, with highest levels in liver and kidney (at protein level). Up-regulated in synovial tissues from patients with rheumatoid arthritis (at protein level).

It is found in the endoplasmic reticulum membrane. It catalyses the reaction S-ubiquitinyl-[E2 ubiquitin-conjugating enzyme]-L-cysteine + [acceptor protein]-L-lysine = [E2 ubiquitin-conjugating enzyme]-L-cysteine + N(6)-ubiquitinyl-[acceptor protein]-L-lysine.. It functions in the pathway protein modification; protein ubiquitination. In terms of biological role, E3 ubiquitin-protein ligase which accepts ubiquitin specifically from endoplasmic reticulum-associated UBC7 E2 ligase and transfers it to substrates, promoting their degradation. Component of the endoplasmic reticulum quality control (ERQC) system also called ER-associated degradation (ERAD) involved in ubiquitin-dependent degradation of misfolded endoplasmic reticulum proteins. Also promotes the degradation of normal but naturally short-lived proteins such as SGK. Protects cells from ER stress-induced apoptosis. Protects neurons from apoptosis induced by polyglutamine-expanded huntingtin (HTT) or unfolded GPR37 by promoting their degradation. Sequesters p53/TP53 in the cytoplasm and promotes its degradation, thereby negatively regulating its biological function in transcription, cell cycle regulation and apoptosis. Mediates the ubiquitination and subsequent degradation of cytoplasmic NFE2L1. During the early stage of B cell development, required for degradation of the pre-B cell receptor (pre-BCR) complex, hence supporting further differentiation into mature B cells. The protein is E3 ubiquitin-protein ligase synoviolin of Homo sapiens (Human).